A 260-amino-acid polypeptide reads, in one-letter code: HTH-type transcriptional repressor NanR (260 aa).

An HTH gntR-type domain is found at 27–95 (KKLSEMVEEE…NGERARVSRP (69 aa)). Positions 55-74 (ERELMAFFNVGRPSVREALA) form a DNA-binding region, H-T-H motif.

Belongs to the NanR family.

In terms of biological role, transcriptional repressor that controls expression of the genes required for the catabolism of sialic acids. This is HTH-type transcriptional repressor NanR from Citrobacter rodentium (strain ICC168) (Citrobacter freundii biotype 4280).